A 318-amino-acid polypeptide reads, in one-letter code: NADH-ubiquinone oxidoreductase chain 1 (318 aa).

8 helical membrane passes run P2–L22, I68–P88, L100–G120, L146–V166, H171–A191, I213–M233, E253–I273, and L285–I305.

It belongs to the complex I subunit 1 family. As to quaternary structure, core subunit of respiratory chain NADH dehydrogenase (Complex I) which is composed of 45 different subunits.

It is found in the mitochondrion inner membrane. It carries out the reaction a ubiquinone + NADH + 5 H(+)(in) = a ubiquinol + NAD(+) + 4 H(+)(out). Its function is as follows. Core subunit of the mitochondrial membrane respiratory chain NADH dehydrogenase (Complex I) which catalyzes electron transfer from NADH through the respiratory chain, using ubiquinone as an electron acceptor. Essential for the catalytic activity and assembly of complex I. The protein is NADH-ubiquinone oxidoreductase chain 1 (MT-ND1) of Pan troglodytes (Chimpanzee).